Consider the following 303-residue polypeptide: Sulfate adenylyltransferase subunit 2 (303 aa).

Belongs to the PAPS reductase family. CysD subfamily. As to quaternary structure, heterodimer composed of CysD, the smaller subunit, and CysN.

The enzyme catalyses sulfate + ATP + H(+) = adenosine 5'-phosphosulfate + diphosphate. The protein operates within sulfur metabolism; hydrogen sulfide biosynthesis; sulfite from sulfate: step 1/3. In terms of biological role, with CysN forms the ATP sulfurylase (ATPS) that catalyzes the adenylation of sulfate producing adenosine 5'-phosphosulfate (APS) and diphosphate, the first enzymatic step in sulfur assimilation pathway. APS synthesis involves the formation of a high-energy phosphoric-sulfuric acid anhydride bond driven by GTP hydrolysis by CysN coupled to ATP hydrolysis by CysD. The protein is Sulfate adenylyltransferase subunit 2 of Sulfurimonas denitrificans (strain ATCC 33889 / DSM 1251) (Thiomicrospira denitrificans (strain ATCC 33889 / DSM 1251)).